The primary structure comprises 262 residues: Phosphatidylglycerol--prolipoprotein diacylglyceryl transferase 1 (262 aa).

The next 4 membrane-spanning stretches (helical) occupy residues 15-35, 40-60, 83-103, and 108-128; these read WYGI…SINA, LNFD…IIGA, QGGL…FIYC, and VDFL…QGIG. Position 129 (Arg129) interacts with a 1,2-diacyl-sn-glycero-3-phospho-(1'-sn-glycerol). 3 consecutive transmembrane segments (helical) span residues 169–189, 197–217, and 229–249; these read TFLY…IILY, GVVI…IEGL, and VAQL…IIIV.

The protein belongs to the Lgt family.

The protein resides in the cell membrane. The catalysed reaction is L-cysteinyl-[prolipoprotein] + a 1,2-diacyl-sn-glycero-3-phospho-(1'-sn-glycerol) = an S-1,2-diacyl-sn-glyceryl-L-cysteinyl-[prolipoprotein] + sn-glycerol 1-phosphate + H(+). It functions in the pathway protein modification; lipoprotein biosynthesis (diacylglyceryl transfer). Catalyzes the transfer of the diacylglyceryl group from phosphatidylglycerol to the sulfhydryl group of the N-terminal cysteine of a prolipoprotein, the first step in the formation of mature lipoproteins. This chain is Phosphatidylglycerol--prolipoprotein diacylglyceryl transferase 1, found in Clostridium perfringens (strain 13 / Type A).